The sequence spans 862 residues: Protein JOKA2 (862 aa).

The PB1 domain occupies 6-90; it reads SIVIKVKYEE…NPLRISARLN (85 aa). The segment covering 92–106 has biased composition (low complexity); that stretch reads GERSGRASARSSGNS. 3 disordered regions span residues 92 to 117, 194 to 234, and 295 to 345; these read GERS…VQPP, KGNT…ASNE, and VRNS…DSSG. Residues 325-345 are compositionally biased toward polar residues; the sequence is SASSSKVKQCNWDSPNADSSG. The ZZ-type; degenerate zinc-finger motif lies at 442–492; the sequence is HKGVRCDGCGVHPITGPRFISKVKENYDLCSICFAEMGNDADYIRMDRPLT. Zn(2+)-binding residues include C447, C450, C471, and C474. In terms of domain architecture, UBA spans 811–860; the sequence is SVDDLCGVAEWDPILEELKEMGFCDKEMNKKLLKKNNGSIKRVVMDLIAG. Residues 817–824 carry the ATG8 interacting motif (AIM) motif; the sequence is GVAEWDPI.

As to quaternary structure, interacts (via C-terminal AIM motif) with ATG8CL.

Its subcellular location is the vacuole. The protein localises to the cytoplasmic vesicle. It is found in the autophagosome. Autophagic substrate that functions as a host autophagy cargo receptor. Requires ATG8 protein expression to be recognized as an autophagic substrate. Activates ATG8CL-mediated selective autophagy, and contributes to defense against the fungal pathogen Phytophtora infestans. This chain is Protein JOKA2, found in Solanum tuberosum (Potato).